The following is a 117-amino-acid chain: UPF0642 protein C32H8.05 (117 aa).

The segment at 39–117 (DQVNDLTKSS…SNFSKFLKKK (79 aa)) is disordered. A compositionally biased stretch (basic residues) spans 93–106 (KWAKKHLKKGKRAK). Residues 107–117 (NSNFSKFLKKK) show a composition bias toward low complexity.

This sequence belongs to the UPF0642 family.

Its subcellular location is the nucleus. The protein resides in the nucleolus. This chain is UPF0642 protein C32H8.05, found in Schizosaccharomyces pombe (strain 972 / ATCC 24843) (Fission yeast).